The sequence spans 275 residues: Nitrogenase iron protein 3 (275 aa).

ATP is bound at residue 9 to 16; that stretch reads GKGGIGKS. Cys-97 is a binding site for [4Fe-4S] cluster. Arg-100 is modified (ADP-ribosylarginine; by dinitrogenase reductase ADP-ribosyltransferase). Position 132 (Cys-132) interacts with [4Fe-4S] cluster.

It belongs to the NifH/BchL/ChlL family. Homodimer. [4Fe-4S] cluster is required as a cofactor. The reversible ADP-ribosylation of Arg-100 inactivates the nitrogenase reductase and regulates nitrogenase activity.

The enzyme catalyses N2 + 8 reduced [2Fe-2S]-[ferredoxin] + 16 ATP + 16 H2O = H2 + 8 oxidized [2Fe-2S]-[ferredoxin] + 2 NH4(+) + 16 ADP + 16 phosphate + 6 H(+). Its function is as follows. The key enzymatic reactions in nitrogen fixation are catalyzed by the nitrogenase complex, which has 2 components: the iron protein (component 2) and a component 1 which is either a molybdenum-iron protein, a vanadium-iron, or an iron-iron protein. In Azotobacter vinelandii, this protein is Nitrogenase iron protein 3 (anfH).